Here is a 352-residue protein sequence, read N- to C-terminus: Putative formin-like protein 15b (352 aa).

The FH2 domain maps to 1-350 (MTLFNFIKLF…KDAKEAEMEK (350 aa)).

It belongs to the formin-like family. Class-II subfamily.

In Arabidopsis thaliana (Mouse-ear cress), this protein is Putative formin-like protein 15b (FH15B).